The following is a 1145-amino-acid chain: TAWTFLKAMQKCSKKREARGSREAPETNFPDTTEESAQQICCTRDSSDSKSVPRSERNKKGIQCQGEGSSRGSQPGQFVGVTYNLEKRPTTIVLINDTPLNVLLDTGADTSVLTTAHYNRLKYRGRKYQGTGIIGVGGNVETFSTPVTIKKKGRHIKTRMLVADIPVTILGRDILQDLGAKLVLAQLSKEIKFRKIELKEGTMGPKIPQWPLTKEKLEGAKETVQRLLSEGKISEASDNNPYNSPIFVIKKRSGKWRLLQDLRELNKTVQVGTEISRGLPHPGGLIKCKHMTVLDIGDAYFTIPLDPEFRPYTAFTIPSINHQEPDKRYVWKCLPQGFVLSPYIYQKTLQEILQPFRERYPEVQLYQYMDDLFVGSNGSKKQHKELIIELRAILQKGFETPDDKLQEVPPYSWLGYQLCPENWKVQKMQLDMVKNPTLNDVQKLMGNITWMSSGVPGLTVKHIAATTKGCLELNQKVIWTEEAQKELEENNEKIKNAQGLQYYNPEEEMLCEVEITKNYEATYVIKQSQGILWAGKKIMKANKGWSTVKNLMLLLQHVATESITRVGKCPTFKVPFTKEQVMWEMQKGWYYSWLPEIVYTHQVVHDDWRMKLVEEPTSGITIYTDGGKQNGEGIAAYVTSNGRTKQKRLGPVTHQVAERMAIQMALEDTRDKQVNIVTDSYYCWKNITEGLGLEGPQNPWWPIIQNIREKEIVYFAWVPGHKGIYGNQLADEAAKIKEEIMLAYQGTQIKEKRDEDAGFDLCVPYDIMIPVSDTKIIPTDVKIQVPPNSFGWVTGKSSMAKQGLLINGGIIDEGYTGEIQVICTNIGKSNIKLIEGQKFAQLIILQHHSNSRQPWDENKISQRGDKGFGSTGVFWVENIQEAQDEHENWHTSPKILARNYKIPLTVAKQITQECPHCTKQGSGPAGCVMRSPNHWQADCTHLDNKIILHFVESNSGYIHATLLSKENALCTSLAILEWARLFSPKSLHTDNGTNFVAEPVVNLLKFLKIAHTTGIPYHPESQGIVERANRTLKEKIQSHRDNTQTLEAALQLALITCNKGRESMGGQTPWEVFITNQAQVIHEKLLLQQAQSSKKFCFYKIPGEHDWKGPTRVLWKGDGAVVVNDEGKGIIAVPLTRTKLLIKPN.

The tract at residues 13 to 77 (SKKREARGSR…GSSRGSQPGQ (65 aa)) is disordered. Over residues 29 to 41 (FPDTTEESAQQIC) the composition is skewed to polar residues. Residues 45-59 (DSSDSKSVPRSERNK) show a composition bias toward basic and acidic residues. Positions 66 to 76 (GEGSSRGSQPG) are enriched in polar residues. Residues 100 to 174 (LNVLLDTGAD…IPVTILGRDI (75 aa)) form the Peptidase A2 domain. Residue Asp105 is part of the active site. The Reverse transcriptase domain occupies 230–418 (EGKISEASDN…PPYSWLGYQL (189 aa)). In terms of domain architecture, RNase H type-1 spans 616-739 (PTSGITIYTD…ADEAAKIKEE (124 aa)). Residues 877-918 (ENIQEAQDEHENWHTSPKILARNYKIPLTVAKQITQECPHCT) form an Integrase-type zinc finger. Residues His886, His890, Cys914, and Cys917 each coordinate Zn(2+). Residues 920–1077 (QGSGPAGCVM…TPWEVFITNQ (158 aa)) enclose the Integrase catalytic domain. The segment at residues 1095 to 1143 (KFCFYKIPGEHDWKGPTRVLWKGDGAVVVNDEGKGIIAVPLTRTKLLIK) is a DNA-binding region (integrase-type).

This sequence belongs to the retroviral Pol polyprotein family. Post-translationally, specific enzymatic cleavages in vivo yield mature proteins.

It carries out the reaction Endohydrolysis of RNA in RNA/DNA hybrids. Three different cleavage modes: 1. sequence-specific internal cleavage of RNA. Human immunodeficiency virus type 1 and Moloney murine leukemia virus enzymes prefer to cleave the RNA strand one nucleotide away from the RNA-DNA junction. 2. RNA 5'-end directed cleavage 13-19 nucleotides from the RNA end. 3. DNA 3'-end directed cleavage 15-20 nucleotides away from the primer terminus.. The enzyme catalyses 3'-end directed exonucleolytic cleavage of viral RNA-DNA hybrid.. The catalysed reaction is DNA(n) + a 2'-deoxyribonucleoside 5'-triphosphate = DNA(n+1) + diphosphate. In terms of biological role, during replicative cycle of retroviruses, the reverse-transcribed viral DNA is integrated into the host chromosome by the viral integrase enzyme. RNase H activity is associated with the reverse transcriptase. This Equus asinus (Donkey) protein is Pol polyprotein (pol).